The chain runs to 491 residues: Proline-rich protein PRCC (491 aa).

The mediates interaction with MAD2L2 stretch occupies residues Met1–Glu100. Disordered stretches follow at residues Met1–Ala244, Ile260–Gln313, and Glu432–Lys454. Acidic residues predominate over residues Asp10–Ala26. The span at Ala40 to Ala49 shows a compositional bias: low complexity. Positions Leu50–Val96 are enriched in pro residues. Phosphoserine occurs at positions 97, 114, 157, 159, 212, and 218. Residues Gly111–Leu120 show a composition bias toward low complexity. The span at Ala230 to Ala244 shows a compositional bias: low complexity. The residue at position 239 (Thr239) is a Phosphothreonine. Ser241 and Ser267 each carry phosphoserine. The span at Gln262 to Ala272 shows a compositional bias: acidic residues. Over residues Gly287–Glu307 the composition is skewed to pro residues.

Interacts with MAD2L2; the interaction is direct. As to expression, ubiquitous in fetal and adult tissues.

Its subcellular location is the nucleus. In terms of biological role, may regulate cell cycle progression through interaction with MAD2L2. The chain is Proline-rich protein PRCC (PRCC) from Homo sapiens (Human).